The primary structure comprises 87 residues: Homeotic protein ultrabithorax (87 aa).

An Antp-type hexapeptide motif is present at residues 22–27 (FYPWMA).

This sequence belongs to the Antp homeobox family. In the embryo, expression is seen in the epidermis, somatic and visceral mesoderm, and the peripheral and central nervous system.

The protein resides in the nucleus. Sequence-specific transcription factor which is part of a developmental regulatory system that provides cells with specific positional identities on the anterior-posterior axis. Binds the consensus region 5'-TTAAT[GT][GA]-3'. This homeotic protein controls development of the cells in the posterior thoracic and first abdominal segments. It activates the synthesis of the decapentaplegic (DPP) growth factor. This chain is Homeotic protein ultrabithorax (Ubx), found in Drosophila virilis (Fruit fly).